The following is a 158-amino-acid chain: NAD(P)H-quinone oxidoreductase subunit J, chloroplastic (158 aa).

It belongs to the complex I 30 kDa subunit family. In terms of assembly, NDH is composed of at least 16 different subunits, 5 of which are encoded in the nucleus.

The protein localises to the plastid. It is found in the chloroplast thylakoid membrane. The catalysed reaction is a plastoquinone + NADH + (n+1) H(+)(in) = a plastoquinol + NAD(+) + n H(+)(out). It carries out the reaction a plastoquinone + NADPH + (n+1) H(+)(in) = a plastoquinol + NADP(+) + n H(+)(out). In terms of biological role, NDH shuttles electrons from NAD(P)H:plastoquinone, via FMN and iron-sulfur (Fe-S) centers, to quinones in the photosynthetic chain and possibly in a chloroplast respiratory chain. The immediate electron acceptor for the enzyme in this species is believed to be plastoquinone. Couples the redox reaction to proton translocation, and thus conserves the redox energy in a proton gradient. This Nuphar advena (Common spatterdock) protein is NAD(P)H-quinone oxidoreductase subunit J, chloroplastic.